The primary structure comprises 952 residues: Glycine dehydrogenase (decarboxylating) (952 aa).

N6-(pyridoxal phosphate)lysine is present on Lys696.

It belongs to the GcvP family. The glycine cleavage system is composed of four proteins: P, T, L and H. The cofactor is pyridoxal 5'-phosphate.

It carries out the reaction N(6)-[(R)-lipoyl]-L-lysyl-[glycine-cleavage complex H protein] + glycine + H(+) = N(6)-[(R)-S(8)-aminomethyldihydrolipoyl]-L-lysyl-[glycine-cleavage complex H protein] + CO2. Its function is as follows. The glycine cleavage system catalyzes the degradation of glycine. The P protein binds the alpha-amino group of glycine through its pyridoxal phosphate cofactor; CO(2) is released and the remaining methylamine moiety is then transferred to the lipoamide cofactor of the H protein. The polypeptide is Glycine dehydrogenase (decarboxylating) (Pelagibacter ubique (strain HTCC1062)).